Here is a 401-residue protein sequence, read N- to C-terminus: MNKWLCCALLVLLDIIEWTTQETLPPKYLHYDPETGHQLLCDKCAPGTYLKQHCTVRRKTLCVPCPDHSYTDSWHTSDECVYCSPVCKELQSVKQECNRTHNRVCECEEGRYLEIEFCLKHRSCPPGSGVVQAGTPERNTVCKKCPDGFFSGETSSKAPCIKHTNCSTFGLLLIQKGNATHDNVCSGNREATQKCGIDVTLCEEAFFRFAVPTKIIPNWLSVLVDSLPGTKVNAESVERIKRRHSSQEQTFQLLKLWKHQNRDQEMVKKIIQDIDLCESSVQRHLGHSNLTTEQLLALMESLPGKKISPEEIERTRKTCKSSEQLLKLLSLWRIKNGDQDTLKGLMYALKHLKTSHFPKTVTHSLRKTMRFLHSFTMYRLYQKLFLEMIGNQVQSVKISCL.

The N-terminal stretch at 1–21 is a signal peptide; sequence MNKWLCCALLVLLDIIEWTTQ. 4 TNFR-Cys repeats span residues 24–62, 65–105, 107–142, and 145–185; these read LPPKYLHYDPETGHQLLCDKCAPGTYLKQHCTVRRKTLC, CPDH…NRVC, CEEGRYLEIEFCLKHRSCPPGSGVVQAGTPERNTVC, and CPDG…DNVC. 8 cysteine pairs are disulfide-bonded: C41-C54, C44-C62, C65-C80, C83-C97, C87-C105, C107-C118, C124-C142, and C145-C160. The N-linked (GlcNAc...) asparagine glycan is linked to N98. N-linked (GlcNAc...) asparagine glycosylation is found at N165 and N178. The cysteines at positions 166 and 185 are disulfide-linked. Death domains are found at residues 198-269 and 283-365; these read DVTL…MVKK and RHLG…THSL. An N-linked (GlcNAc...) asparagine glycan is attached at N289.

In terms of assembly, homodimer. Interacts with TNFSF10 and TNFSF11. In terms of tissue distribution, highly expressed in liver, lung, stomach, intestines and calvaria. Highly expressed in decidua and placenta, and in embryo.

The protein localises to the secreted. Acts as a decoy receptor for TNFSF11/RANKL and thereby neutralizes its function in osteoclastogenesis. Inhibits the activation of osteoclasts and promotes osteoclast apoptosis in vitro. Bone homeostasis seems to depend on the local ratio between TNFSF11 and TNFRSF11B. May also play a role in preventing arterial calcification. May act as decoy receptor for TNFSF10/TRAIL and protect against apoptosis. TNFSF10/TRAIL binding blocks the inhibition of osteoclastogenesis. The sequence is that of Tumor necrosis factor receptor superfamily member 11B (Tnfrsf11b) from Mus musculus (Mouse).